Here is a 588-residue protein sequence, read N- to C-terminus: Ufm1-specific protease (588 aa).

Catalysis depends on residues cysteine 420, aspartate 544, and histidine 546.

It belongs to the peptidase C78 family. As to quaternary structure, interacts with odr-4.

The protein resides in the endoplasmic reticulum membrane. It is found in the cytoplasm. The protein localises to the perinuclear region. Thiol protease which recognizes and hydrolyzes the peptide bond at the C-terminal Gly of ufm-1, a ubiquitin-like modifier protein bound to a number of target proteins. Required, with oct-4, for the localization of a subset of 7 transmembrane domain odorant receptors, including odr-10, to the cilia of olfactory neurons AWA and AWC. Operates in aggregation behavior, and responses to oxygen levels. In Caenorhabditis briggsae, this protein is Ufm1-specific protease.